The sequence spans 278 residues: UPF0758 protein BURPS1106A_0984 (278 aa).

The disordered stretch occupies residues 1–64; the sequence is MQYEIVSAGE…ATAAARRGRD (64 aa). A compositionally biased stretch (low complexity) spans 22–59; sequence AAAPAAPSSAVPSSAALSSAALSSAAQPTGAPPATAAA. One can recognise an MPN domain in the interval 156–278; sequence LVDSPGAVDD…TFSFAQAGWI (123 aa). Zn(2+)-binding residues include histidine 227, histidine 229, and aspartate 240. Residues 227–240 carry the JAMM motif motif; the sequence is HNHPSGAVRPSAAD.

Belongs to the UPF0758 family.

This Burkholderia pseudomallei (strain 1106a) protein is UPF0758 protein BURPS1106A_0984.